The chain runs to 1252 residues: HEAT repeat-containing protein 6 (1252 aa).

Residues 230–269 (PDLLGKSGLLMKLSDVTHSDPEVRRAAVHCMANLCLSVPG) form an HEAT 1 repeat. The tract at residues 365–417 (DGRSPVKPQQPESSAARPSANKKKKYKVKPKKTQQGEKAEEEEPYGEVDAAPG) is disordered. Basic residues predominate over residues 384–396 (ANKKKKYKVKPKK). Ser-471 and Ser-474 each carry phosphoserine. HEAT repeat units lie at residues 524 to 562 (ELGS…GSKQ), 586 to 624 (SSIR…NAPY), and 630 to 667 (SLLT…THAP). A Phosphothreonine modification is found at Thr-689. Ser-714 is modified (phosphoserine).

This is HEAT repeat-containing protein 6 (Heatr6) from Rattus norvegicus (Rat).